The following is a 132-amino-acid chain: Small ribosomal subunit protein uS8 (132 aa).

Belongs to the universal ribosomal protein uS8 family. As to quaternary structure, part of the 30S ribosomal subunit. Contacts proteins S5 and S12.

Functionally, one of the primary rRNA binding proteins, it binds directly to 16S rRNA central domain where it helps coordinate assembly of the platform of the 30S subunit. The sequence is that of Small ribosomal subunit protein uS8 from Bacillus subtilis (strain 168).